A 135-amino-acid polypeptide reads, in one-letter code: MVSRDFDRDKRLLTARQFSAVFDSPTGKVPGKHVLLLARENGLDHPRLGLVIGKKNVKLAVQRNRLKRLIRESFRHNQETLAGWDIVVIARKGLGELENPELHQQFGKLWKRLLRNRPRTESPADAPGVADGTHA.

It belongs to the RnpA family. In terms of assembly, consists of a catalytic RNA component (M1 or rnpB) and a protein subunit.

The enzyme catalyses Endonucleolytic cleavage of RNA, removing 5'-extranucleotides from tRNA precursor.. In terms of biological role, RNaseP catalyzes the removal of the 5'-leader sequence from pre-tRNA to produce the mature 5'-terminus. It can also cleave other RNA substrates such as 4.5S RNA. The protein component plays an auxiliary but essential role in vivo by binding to the 5'-leader sequence and broadening the substrate specificity of the ribozyme. In Pseudomonas aeruginosa (strain ATCC 15692 / DSM 22644 / CIP 104116 / JCM 14847 / LMG 12228 / 1C / PRS 101 / PAO1), this protein is Ribonuclease P protein component.